Consider the following 94-residue polypeptide: Small ribosomal subunit protein bS6 (94 aa).

The protein belongs to the bacterial ribosomal protein bS6 family.

Functionally, binds together with bS18 to 16S ribosomal RNA. The sequence is that of Small ribosomal subunit protein bS6 from Clostridium botulinum (strain Hall / ATCC 3502 / NCTC 13319 / Type A).